A 1247-amino-acid chain; its full sequence is Structural polyprotein (1247 aa).

The interval 36-67 is host transcription inhibition; it reads RPAGQLAQLISAVSRLALRTVPQKPRRTRKIK. Residues 54–103 form a disordered region; sequence RTVPQKPRRTRKIKKQKQVKQEQQSTTNQKKKAPKQKQTQKKKRPGRRER. Composition is skewed to basic residues over residues 59 to 71 and 82 to 100; these read KPRR…KQKQ and QKKK…RPGR. Positions 60 to 98 match the Nuclear localization signal motif; the sequence is PRRTRKIKKQKQVKQEQQSTTNQKKKAPKQKQTQKKKRP. The binding to the viral RNA stretch occupies residues 83–113; sequence KKKAPKQKQTQKKKRPGRRERMCMKIENDCI. The tract at residues 98–112 is ribosome-binding; the sequence is PGRRERMCMKIENDC. A disulfide bridge connects residues C112 and C127. The Peptidase S3 domain maps to 112–260; sequence CIFEVRHEGK…KITPEGSVEW (149 aa). The active-site Charge relay system is the H138. Residues 143 to 153 carry the Nuclear export signal motif; the sequence is IDNADLAKLAF. The tract at residues 154-159 is interaction with spike glycoprotein E2; it reads KRSSKY. Catalysis depends on D160, which acts as the Charge relay system. Residues 182 to 192 form a dimerization of the capsid protein region; sequence PEGYYNWHHGA. Catalysis depends on S212, which acts as the Charge relay system. The tract at residues 218–222 is dimerization of the capsid protein; that stretch reads DNKGR. The interval 261-273 is functions as an uncleaved signal peptide for the precursor of protein E3/E2; sequence SLALPVMCLLANT. 9 cysteine pairs are disulfide-bonded: C268/C277, C282/C286, C285/C317, C343/C449, C346/C352, C415/C429, C477/C590, C525/C549, and C527/C544. N272 carries an N-linked (GlcNAc...) asparagine; by host glycan. 2 N-linked (GlcNAc...) asparagine; by host glycosylation sites follow: N587 and N669. The chain crosses the membrane as a helical span at residues 692–712; it reads IAVLAAASIVITSLVGLSLGM. The interval 715–719 is interaction with the capsid protein; sequence CARRR. 3 S-palmitoyl cysteine; by host lipidation sites follow: C720, C740, and C741. Residues 720–740 form a helical membrane-spanning segment; the sequence is CITPYELTPGATIPFLLGVLC. The interval 720 to 740 is transient transmembrane before p62-6K protein processing; that stretch reads CITPYELTPGATIPFLLGVLC. C720 and C741 are oxidised to a cystine. Residues 763 to 783 form a helical membrane-spanning segment; that stretch reads PLFWLQLLIPLSAAIVVCNCL. 4 disulfide bridges follow: C857–C922, C870–C902, C871–C904, and C876–C886. The interval 892–909 is E1 fusion peptide loop; it reads VYPFMWGGAYCFCDAENT. N-linked (GlcNAc...) asparagine; by host glycosylation is found at N949 and N1078. Intrachain disulfides connect C1067/C1079, C1109/C1184, C1114/C1188, and C1136/C1178. The chain crosses the membrane as a helical span at residues 1224–1244; sequence GVGLVVAIAALILIIVLCVSF. A lipid anchor (S-palmitoyl cysteine; by host) is attached at C1241. C1241 carries the S-stearoyl cysteine; by host lipid modification.

In terms of assembly, homodimer. Homomultimer. Interacts with host karyopherin KPNA4; this interaction allows the nuclear import of the viral capsid protein. Interacts with spike glycoprotein E2. Interacts with host IRAK1; the interaction leads to inhibition of IRAK1-dependent signaling. As to quaternary structure, the precursor of protein E3/E2 and E1 form a heterodimer shortly after synthesis. The precursor of protein E3/E2 and E1 form a heterodimer shortly after synthesis. Processing of the precursor of protein E3/E2 into E2 and E3 results in a heterodimer of the spike glycoproteins E2 and E1. Spike at virion surface are constituted of three E2-E1 heterodimers. After target cell attachment and endocytosis, E1 change conformation to form homotrimers. Interacts with 6K protein. In terms of assembly, interacts with spike glycoprotein E1. Processing of the precursor of protein E3/E2 into E2 and E3 results in a heterodimer of the spike glycoproteins E2 and E1. Spike at virion surface are constituted of a trimer of E2-E1 heterodimers. Interacts with 6K protein. Interacts with host MXRA8; this interaction mediates virus entry. As to quaternary structure, oligomer. Interacts with spike glycoprotein E1. Interacts with spike glycoprotein E2. Structural polyprotein: Specific enzymatic cleavages in vivo yield mature proteins. Capsid protein is auto-cleaved during polyprotein translation, unmasking a signal peptide at the N-terminus of the precursor of E3/E2. The remaining polyprotein is then targeted to the host endoplasmic reticulum, where host signal peptidase cleaves it into pE2, 6K and E1 proteins. pE2 is further processed to mature E3 and E2 by host furin in trans-Golgi vesicle. Post-translationally, palmitoylated via thioester bonds. These palmitoylations may induce disruption of the C-terminus transmembrane. This would result in the reorientation of E2 C-terminus from lumenal to cytoplasmic side. In terms of processing, N-glycosylated. Palmitoylated via thioester bonds.

The protein localises to the virion. Its subcellular location is the host cytoplasm. It localises to the host cell membrane. The protein resides in the host nucleus. It is found in the virion membrane. The protein localises to the host Golgi apparatus. Its subcellular location is the host trans-Golgi network. It localises to the host endoplasmic reticulum. The catalysed reaction is Autocatalytic release of the core protein from the N-terminus of the togavirus structural polyprotein by hydrolysis of a -Trp-|-Ser- bond.. Forms an icosahedral capsid with a T=4 symmetry composed of 240 copies of the capsid protein surrounded by a lipid membrane through which penetrate 80 spikes composed of trimers of E1-E2 heterodimers. The capsid protein binds to the viral RNA genome at a site adjacent to a ribosome binding site for viral genome translation following genome release. Possesses a protease activity that results in its autocatalytic cleavage from the nascent structural protein. Following its self-cleavage, the capsid protein transiently associates with ribosomes, and within several minutes the protein binds to viral RNA and rapidly assembles into icosahedric core particles. The resulting nucleocapsid eventually associates with the cytoplasmic domain of the spike glycoprotein E2 at the cell membrane, leading to budding and formation of mature virions. In case of infection, new virions attach to target cells and after clathrin-mediated endocytosis their membrane fuses with the host endosomal membrane. This leads to the release of the nucleocapsid into the cytoplasm, followed by an uncoating event necessary for the genomic RNA to become accessible. The uncoating might be triggered by the interaction of capsid proteins with ribosomes. Binding of ribosomes would release the genomic RNA since the same region is genomic RNA-binding and ribosome-binding. Specifically inhibits interleukin-1 receptor-associated kinase 1/IRAK1-dependent signaling during viral entry, representing a means by which the alphaviruses may evade innate immune detection and activation prior to viral gene expression. Functionally, provides the signal sequence for the translocation of the precursor of protein E3/E2 to the host endoplasmic reticulum. Furin-cleaved E3 remains associated with spike glycoprotein E1 and mediates pH protection of the latter during the transport via the secretory pathway. After virion release from the host cell, the assembly protein E3 is gradually released in the extracellular space. In terms of biological role, plays a role in viral attachment to target host cell, by binding to the cell receptor MXRA8. Synthesized as a p62 precursor which is processed by furin at the cell membrane just before virion budding, giving rise to E2-E1 heterodimer. The p62-E1 heterodimer is stable, whereas E2-E1 is unstable and dissociate at low pH. p62 is processed at the last step, presumably to avoid E1 fusion activation before its final export to cell surface. E2 C-terminus contains a transitory transmembrane that would be disrupted by palmitoylation, resulting in reorientation of the C-terminal tail from lumenal to cytoplasmic side. This step is critical since E2 C-terminus is involved in budding by interacting with capsid proteins. This release of E2 C-terminus in cytoplasm occurs lately in protein export, and precludes premature assembly of particles at the endoplasmic reticulum membrane. Its function is as follows. Acts as a viroporin that participates in virus glycoprotein processing and transport to the plasma membrane, cell permeabilization and budding of viral particles. Disrupts the calcium homeostasis of the cell, probably at the endoplasmic reticulum level. This leads to cytoplasmic calcium elevation. Because of its lipophilic properties, the 6K protein is postulated to influence the selection of lipids that interact with the transmembrane domains of the glycoproteins, which, in turn, affects the deformability of the bilayer required for the extreme curvature that occurs as budding proceeds. Present in low amount in virions, about 3% compared to viral glycoproteins. Class II viral fusion protein. Fusion activity is inactive as long as E1 is bound to E2 in mature virion. After virus attachment to target cell via host MXRA8 and endocytosis, acidification of the endosome induce dissociation of E1/E2 heterodimer and concomitant trimerization of the E1 subunits. This E1 trimer is fusion active, and promotes release of viral nucleocapsid in cytoplasm after endosome and viral membrane fusion. Efficient fusion requires the presence of cholesterol and sphingolipid in the target membrane. In O'nyong-nyong virus (strain Gulu) (ONNV), this protein is Structural polyprotein.